A 232-amino-acid chain; its full sequence is Ubiquinone biosynthesis O-methyltransferase (232 aa).

The S-adenosyl-L-methionine site is built by Arg36, Gly55, Asp76, and Leu120.

Belongs to the methyltransferase superfamily. UbiG/COQ3 family.

It carries out the reaction a 3-demethylubiquinol + S-adenosyl-L-methionine = a ubiquinol + S-adenosyl-L-homocysteine + H(+). The catalysed reaction is a 3-(all-trans-polyprenyl)benzene-1,2-diol + S-adenosyl-L-methionine = a 2-methoxy-6-(all-trans-polyprenyl)phenol + S-adenosyl-L-homocysteine + H(+). The protein operates within cofactor biosynthesis; ubiquinone biosynthesis. O-methyltransferase that catalyzes the 2 O-methylation steps in the ubiquinone biosynthetic pathway. The polypeptide is Ubiquinone biosynthesis O-methyltransferase (Pseudomonas paraeruginosa (strain DSM 24068 / PA7) (Pseudomonas aeruginosa (strain PA7))).